The primary structure comprises 512 residues: ATP synthase subunit alpha, chloroplastic (512 aa).

170-177 (GDRQTGKT) contacts ATP.

It belongs to the ATPase alpha/beta chains family. F-type ATPases have 2 components, CF(1) - the catalytic core - and CF(0) - the membrane proton channel. CF(1) has five subunits: alpha(3), beta(3), gamma(1), delta(1), epsilon(1). CF(0) has four main subunits: a, b, b' and c.

Its subcellular location is the plastid. The protein resides in the chloroplast thylakoid membrane. The catalysed reaction is ATP + H2O + 4 H(+)(in) = ADP + phosphate + 5 H(+)(out). Functionally, produces ATP from ADP in the presence of a proton gradient across the membrane. The alpha chain is a regulatory subunit. The polypeptide is ATP synthase subunit alpha, chloroplastic (Staurastrum punctulatum (Green alga)).